An 883-amino-acid chain; its full sequence is Phosphoenolpyruvate carboxylase (883 aa).

Residues His138 and Lys546 contribute to the active site.

Belongs to the PEPCase type 1 family. The cofactor is Mg(2+).

The catalysed reaction is oxaloacetate + phosphate = phosphoenolpyruvate + hydrogencarbonate. Forms oxaloacetate, a four-carbon dicarboxylic acid source for the tricarboxylic acid cycle. The sequence is that of Phosphoenolpyruvate carboxylase from Salmonella gallinarum (strain 287/91 / NCTC 13346).